The chain runs to 101 residues: Large ribosomal subunit protein uL24 (101 aa).

The protein belongs to the universal ribosomal protein uL24 family. Part of the 50S ribosomal subunit.

Functionally, one of two assembly initiator proteins, it binds directly to the 5'-end of the 23S rRNA, where it nucleates assembly of the 50S subunit. In terms of biological role, one of the proteins that surrounds the polypeptide exit tunnel on the outside of the subunit. This is Large ribosomal subunit protein uL24 from Streptococcus pyogenes serotype M2 (strain MGAS10270).